The following is a 669-amino-acid chain: DNA ligase (669 aa).

NAD(+)-binding positions include 35-39, 84-85, and glutamate 116; these read DSVYD and SL. The active-site N6-AMP-lysine intermediate is the lysine 118. NAD(+) is bound by residues arginine 139, glutamate 176, lysine 291, and lysine 315. Residues cysteine 409, cysteine 412, cysteine 427, and cysteine 432 each contribute to the Zn(2+) site. In terms of domain architecture, BRCT spans 591–669; the sequence is TTKATLAGKT…EAQLLELIKA (79 aa).

It belongs to the NAD-dependent DNA ligase family. LigA subfamily. Mg(2+) is required as a cofactor. The cofactor is Mn(2+).

It carries out the reaction NAD(+) + (deoxyribonucleotide)n-3'-hydroxyl + 5'-phospho-(deoxyribonucleotide)m = (deoxyribonucleotide)n+m + AMP + beta-nicotinamide D-nucleotide.. Its function is as follows. DNA ligase that catalyzes the formation of phosphodiester linkages between 5'-phosphoryl and 3'-hydroxyl groups in double-stranded DNA using NAD as a coenzyme and as the energy source for the reaction. It is essential for DNA replication and repair of damaged DNA. This chain is DNA ligase, found in Microcystis aeruginosa (strain NIES-843 / IAM M-2473).